The sequence spans 693 residues: Histone-lysine N-methyltransferase, H3 lysine-9 specific SUVH7 (693 aa).

2 disordered regions span residues tryptophan 64–methionine 99 and aspartate 111–glutamate 175. Residues lysine 129–serine 141 constitute a DNA-binding region (a.T hook). The YDG domain occupies glycine 227–arginine 373. The region spanning glutamine 454–glycine 516 is the Pre-SET domain. Cysteine 458, cysteine 461, cysteine 466, cysteine 471, cysteine 473, cysteine 498, cysteine 502, cysteine 504, and cysteine 508 together coordinate Zn(2+). In terms of domain architecture, SET spans leucine 519–glycine 660. Residues cysteine 529–tryptophan 531, aspartate 562, tyrosine 564, arginine 614, and asparagine 617–histidine 618 each bind S-adenosyl-L-methionine. Residues cysteine 620, cysteine 681, cysteine 683, and cysteine 688 each coordinate Zn(2+). The 17-residue stretch at glycine 677–threonine 693 folds into the Post-SET domain.

It belongs to the class V-like SAM-binding methyltransferase superfamily. Histone-lysine methyltransferase family. Suvar3-9 subfamily.

It localises to the nucleus. The protein resides in the chromosome. The protein localises to the centromere. The enzyme catalyses N(6)-methyl-L-lysyl(9)-[histone H3] + S-adenosyl-L-methionine = N(6),N(6)-dimethyl-L-lysyl(9)-[histone H3] + S-adenosyl-L-homocysteine + H(+). The catalysed reaction is L-lysyl(9)-[histone H3] + S-adenosyl-L-methionine = N(6)-methyl-L-lysyl(9)-[histone H3] + S-adenosyl-L-homocysteine + H(+). Functionally, histone methyltransferase. Methylates 'Lys-9' of histone H3. H3 'Lys-9' methylation represents a specific tag for epigenetic transcriptional repression. This is Histone-lysine N-methyltransferase, H3 lysine-9 specific SUVH7 (SUVH7) from Arabidopsis thaliana (Mouse-ear cress).